The chain runs to 360 residues: MTGLDRKKDDEIIEVLRMMAPGTSLREGLDNILLARTGALIVIGDSEKVLSLVDGGFYINKDYTPAHIYELAKMDGAIILSKDLKKILYANALLVPDTSIPTAETGTRHKTADRVAKQTGEVVVSISQRRNIITIYMGSRKYILRETPVILAEANQALQTLEKYKVALVEAINNLNILEIEDIVTLDDVAFVLQRTEMLMRVAAEIERYISELGSEGRLISLQLDELLTNVDADELFIIEDYAIRTDLRSDEILEKLRQLSYDELMNLVNICSILGYSPNADAFEMVISPRGYRLLSKIPRVPVNIIRNLVKKFSNLQGILNASIEELDDVAGIGEVRARIIWDGLRRVQEQIFLDSRKL.

Residues 9 to 147 (DDEIIEVLRM…GSRKYILRET (139 aa)) enclose the DAC domain. ATP is bound by residues Gly-76, Leu-94, and 107-111 (TRHKT).

This sequence belongs to the DisA family. In terms of assembly, homooctamer. Requires Mg(2+) as cofactor.

The enzyme catalyses 2 ATP = 3',3'-c-di-AMP + 2 diphosphate. Functionally, participates in a DNA-damage check-point that is active prior to asymmetric division when DNA is damaged. DisA forms globular foci that rapidly scan along the chromosomes during sporulation, searching for lesions. When a lesion is present, DisA pauses at the lesion site. This triggers a cellular response that culminates in a temporary block in sporulation initiation. Also has diadenylate cyclase activity, catalyzing the condensation of 2 ATP molecules into cyclic di-AMP (c-di-AMP). c-di-AMP acts as a signaling molecule that couples DNA integrity with progression of sporulation. The rise in c-di-AMP level generated by DisA while scanning the chromosome, operates as a positive signal that advances sporulation; upon encountering a lesion, the DisA focus arrests at the damaged site and halts c-di-AMP synthesis. This Acetivibrio thermocellus (strain ATCC 27405 / DSM 1237 / JCM 9322 / NBRC 103400 / NCIMB 10682 / NRRL B-4536 / VPI 7372) (Clostridium thermocellum) protein is DNA integrity scanning protein DisA.